Reading from the N-terminus, the 205-residue chain is Heat shock protein beta-1 (205 aa).

Omega-N-methylarginine is present on R12. S15 is modified (phosphoserine; by MAPKAPK2 and MAPKAPK3). Phosphoserine occurs at positions 26 and 65. The tract at residues 70-205 (APAYSRALSR…AAKSDETAAK (136 aa)) is interaction with TGFB1I1. The sHSP domain maps to 76–184 (ALSRQLSSGV…QSNEITIPVT (109 aa)). A phosphoserine; by MAPKAPK2, MAPKAPK3 and MAPKAPK5 mark is found at S78 and S82. 3 positions are modified to phosphoserine: S83, S86, and S98. The residue at position 123 (K123) is an N6-acetyllysine. A Phosphothreonine modification is found at T174. Residues S176 and S199 each carry the phosphoserine modification.

It belongs to the small heat shock protein (HSP20) family. In terms of assembly, homooligomer. Homodimer; becomes monomeric upon activation. Heterooligomer; with HSPB6. Associates with alpha- and beta-tubulin. Interacts with TGFB1I1. Interacts with CRYAB. Interacts with HSPB8. Interacts with HSPBAP1. Phosphorylated upon exposure to protein kinase C activators and heat shock. Phosphorylation by MAPKAPK2 and MAPKAPK3 in response to stress dissociates HSPB1 from large small heat-shock protein (sHsps) oligomers and impairs its chaperone activity and ability to protect against oxidative stress effectively. Phosphorylation by MAPKAPK5 in response to PKA stimulation induces F-actin rearrangement. Detected in all tissues tested: skeletal muscle, heart, aorta, large intestine, small intestine, stomach, esophagus, bladder, adrenal gland, thyroid, pancreas, testis, adipose tissue, kidney, liver, spleen, cerebral cortex, blood serum and cerebrospinal fluid. Highest levels are found in the heart and in tissues composed of striated and smooth muscle.

It is found in the cytoplasm. It localises to the nucleus. Its subcellular location is the cytoskeleton. The protein localises to the spindle. Small heat shock protein which functions as a molecular chaperone probably maintaining denatured proteins in a folding-competent state. Plays a role in stress resistance and actin organization. Through its molecular chaperone activity may regulate numerous biological processes including the phosphorylation and the axonal transport of neurofilament proteins. The sequence is that of Heat shock protein beta-1 (HSPB1) from Homo sapiens (Human).